A 301-amino-acid polypeptide reads, in one-letter code: ATP synthase gamma chain (301 aa).

The protein belongs to the ATPase gamma chain family. As to quaternary structure, F-type ATPases have 2 components, CF(1) - the catalytic core - and CF(0) - the membrane proton channel. CF(1) has five subunits: alpha(3), beta(3), gamma(1), delta(1), epsilon(1). CF(0) has three main subunits: a, b and c.

Its subcellular location is the cell inner membrane. In terms of biological role, produces ATP from ADP in the presence of a proton gradient across the membrane. The gamma chain is believed to be important in regulating ATPase activity and the flow of protons through the CF(0) complex. This is ATP synthase gamma chain from Helicobacter pylori (strain Shi470).